Reading from the N-terminus, the 266-residue chain is Vesicle-associated protein 4-1 (266 aa).

Residues 28 to 57 (STTSSSSTQNPNQNYRSRHGNRNTDISAVS) form a disordered region. The MSP domain occupies 76–199 (RLRLDPSSYL…VEQVLRVIFI (124 aa)). Residues 200–228 (DADRPSAALEKLKRQLDEAEAAVEARKKP) are a coiled coil. Over residues 219–229 (EAAVEARKKPP) the composition is skewed to basic and acidic residues. A disordered region spans residues 219–239 (EAAVEARKKPPPETGPRVVGE). Ser-264 is subject to Phosphoserine.

It belongs to the VAMP-associated protein (VAP) (TC 9.B.17) family.

Functionally, may play a role in vesicle trafficking. This Arabidopsis thaliana (Mouse-ear cress) protein is Vesicle-associated protein 4-1 (PVA41).